Consider the following 368-residue polypeptide: Proline-rich protein 5-like (368 aa).

Serine 28 carries the post-translational modification Phosphoserine. The interval leucine 312–serine 368 is disordered. Residues alanine 353 to serine 368 show a composition bias toward polar residues.

This sequence belongs to the PROTOR family. As to quaternary structure, interacts with the mammalian target of rapamycin complex 2 (mTORC2) which contains MTOR, MLST8, PRR5, RICTOR, MAPKAP1 and DEPTOR. Interacts with RFFL. Interacts (via C-terminus) with ZFP36 (via C-terminus); this interaction may accelerate ZFP36-mediated mRNA decay during stress. Interacts with RICTOR. Post-translationally, ubiquitinated. Ubiquitination by RFFL promotes proteasomal degradation of PRR5L thereby modifying the substrate-specific activity of the mTORC2 complex. Ubiquitination by RFFL is stimulated by LPA/lysophosphatidic acid.

Its function is as follows. Associates with the mTORC2 complex that regulates cellular processes including survival and organization of the cytoskeleton. Regulates the activity of the mTORC2 complex in a substrate-specific manner preventing for instance the specific phosphorylation of PKCs and thereby controlling cell migration. Plays a role in the stimulation of ZFP36-mediated mRNA decay of several ZFP36-associated mRNAs, such as TNF-alpha and GM-CSF, in response to stress. Required for ZFP36 localization to cytoplasmic stress granule (SG) and P-body (PB) in response to stress. The protein is Proline-rich protein 5-like (PRR5L) of Bos taurus (Bovine).